We begin with the raw amino-acid sequence, 203 residues long: CASP-like protein 4B2 (203 aa).

The Cytoplasmic portion of the chain corresponds to 1–57 (MAMVTADASAAADAATKQPDVEKDYSSYNGASTAGAGGGGVVESVVARWRREDMLDK). Residues 58–78 (CPLALHAAAAAFAFVALVLVA) form a helical membrane-spanning segment. The Extracellular portion of the chain corresponds to 79–92 (SNQHGDWMQFDRYQ). The helical transmembrane segment at 93–113 (EYMYLLAIAALAFAYSLAQAL) threads the bilayer. Residues 114–135 (RHAHRMRGGADPIPAPSARLFD) lie on the Cytoplasmic side of the membrane. A helical transmembrane segment spans residues 136 to 156 (FIADQVVAYLLMSALSAAIPI). At 157–171 (TNRMRTAVINNFTDA) the chain is on the extracellular side. N167 is a glycosylation site (N-linked (GlcNAc...) asparagine). A helical transmembrane segment spans residues 172–192 (TAAAISMAFLAFVALALSATV). The Cytoplasmic portion of the chain corresponds to 193-203 (SGYKLSRQMYM).

The protein belongs to the Casparian strip membrane proteins (CASP) family. As to quaternary structure, homodimer and heterodimers.

The protein resides in the cell membrane. This is CASP-like protein 4B2 from Hordeum vulgare subsp. vulgare (Domesticated barley).